A 617-amino-acid chain; its full sequence is Manganese lipoxygenase (617 aa).

An N-terminal signal peptide occupies residues 1-17; it reads MRIGLLAFAVAARYVEA. Positions 23–48 are enriched in low complexity; sequence GEEVASSSAPTTLPSTSSSSALPSPT. A disordered region spans residues 23-59; the sequence is GEEVASSSAPTTLPSTSSSSALPSPTKYTLPHEDPNP. 3 N-linked (GlcNAc...) asparagine glycosylation sites follow: Asn109, Asn119, and Asn160. In terms of domain architecture, Lipoxygenase spans 122-617; sequence LRDIQSHGGL…PAVNPFFLSI (496 aa). Mn(2+) contacts are provided by His293, His297, His479, and Asn483. A glycan (N-linked (GlcNAc...) asparagine) is linked at Asn547. Ile617 lines the Mn(2+) pocket.

It belongs to the lipoxygenase family. Manganese lipoxygenase subfamily. The cofactor is Mn(2+).

It is found in the secreted. The catalysed reaction is (9Z,12Z)-octadecadienoate + O2 = (9S)-hydroperoxy-(10E,12Z)-octadecadienoate. It carries out the reaction (9Z,12Z)-octadecadienoate + O2 = (11S)-hydroperoxy-(9Z,12Z)-octadecadienoate. The enzyme catalyses (9Z,12Z)-octadecadienoate + O2 = (13R)-hydroperoxy-(9Z,11E)-octadecadienoate. It catalyses the reaction (9Z,12Z,15Z)-octadecatrienoate + O2 = (9S)-hydroperoxy-(10E,12Z,15Z)-octadecatrienoate. The catalysed reaction is (9Z,12Z,15Z)-octadecatrienoate + O2 = (11R)-hydroperoxy-(9Z,12Z,15Z)-octadecatrienoate. It carries out the reaction (9Z,12Z,15Z)-octadecatrienoate + O2 = (13R)-hydroperoxy-(9Z,11E,15Z)-octadecatrienoate. Functionally, lipoxygenase that metabolizes linoleic and alpha-linolenic acids to 9S-, 11- and 13R-hydroperoxy fatty acids. At the end of lipoxygenation, the intermediate products 11S-HPODE and 13R-HPODE from linoleic acid are then transformed into 9S-HPODE as the final product. The intermediate product 11R-HPOTrE from alpha-linolenic acid is transformed into 9S-HPOTrE and 13R-HPOTrE as the final products. 9S-HPOTrE is further oxidized by the enzyme to 9,16-DiHOTrE as the end product. Also acts on gamma-linolenic acid producing 9-HOTrE(n-6) as the main metabolite. The chain is Manganese lipoxygenase from Nakataea oryzae (Rice stem rot fungus).